The sequence spans 43 residues: Potassium channel toxin gamma-KTx 4.8 (43 aa).

Intrachain disulfides connect Cys-5/Cys-23, Cys-11/Cys-34, Cys-20/Cys-39, and Cys-24/Cys-41.

This sequence belongs to the ergtoxin family. Gamma-KTx 4 subfamily. Expressed by the venom gland.

It localises to the secreted. Reversibly blocks Kv11/ERG potassium channels. This is Potassium channel toxin gamma-KTx 4.8 from Centruroides elegans (Bark scorpion).